The chain runs to 171 residues: MHPFYTRAATMIGEIAAAVSFISKFLRTKGLTSERQLQTFSQSLQELLAEHYKHHWFPEKPCKGSGYRCIRINHKMDPLIGQAAQRIGLSSQELFRLLPSELTLWVDPYEVSYRIGEDGSICVLYEASPAGGSTQNSTNVQMVDSRISCKEELLLGRTSPSKNYNMMTVSG.

Serine 159 bears the Phosphoserine mark.

This sequence belongs to the BTG family. In terms of assembly, interacts with CNOT7 and CNOT8.

Its function is as follows. Anti-proliferative protein. In Homo sapiens (Human), this protein is Protein BTG1 (BTG1).